Reading from the N-terminus, the 208-residue chain is Methionine-R-sulfoxide reductase B1 (208 aa).

Residues glutamine 27–tyrosine 36 are compositionally biased toward basic and acidic residues. Positions glutamine 27 to glutamate 48 are disordered. The region spanning lysine 54–alanine 188 is the MsrB domain. Zn(2+) is bound by residues cysteine 93, cysteine 96, cysteine 154, and cysteine 157. Cysteine 111 and cysteine 177 are oxidised to a cystine. The Nucleophile role is filled by cysteine 177. The segment at aspartate 189–glutamine 208 is disordered.

It belongs to the MsrB Met sulfoxide reductase family. Zn(2+) is required as a cofactor. As to expression, present in the embryonic nervous system (brain and cord) in neuronal cell bodies, along axons. Also present in embryonic muscles in motor axons. Localizes to growing bristle tips where it is distributed in small puntae. Present at and at sites of actin localization.

It localises to the cytoplasm. It is found in the nucleus. Its subcellular location is the cytoskeleton. The enzyme catalyses L-methionyl-[protein] + [thioredoxin]-disulfide + H2O = L-methionyl-(R)-S-oxide-[protein] + [thioredoxin]-dithiol. Its function is as follows. Methionine-sulfoxide reductase that specifically reduces methionine (R)-sulfoxide back to methionine. While in many cases methionine oxidation is the result of random oxidation following oxidative stress, methionine oxidation is also a post-translational modification that takes place on specific residues. Acts as a regulator of actin assembly by reducing methionine (R)-sulfoxide mediated by Mical on actin thereby promoting filament repolymerization. The polypeptide is Methionine-R-sulfoxide reductase B1 (SelR) (Drosophila melanogaster (Fruit fly)).